We begin with the raw amino-acid sequence, 569 residues long: Vacuolar protein sorting-associated protein 53 B (569 aa).

Coiled coils occupy residues 53-90, 125-145, and 295-316; these read TRAKENLNDAICAAEELSHKIQEIKSKAEQTEAMVQDI, QVMTSKRQYKEAATQLEAINE, and KEKSDVEKLLLELKRTLEFERE.

It belongs to the VPS53 family. As to quaternary structure, component of the Golgi-associated retrograde protein (GARP) complex.

The protein localises to the cytoplasm. The protein resides in the golgi apparatus. Its subcellular location is the trans-Golgi network membrane. It is found in the endosome membrane. In terms of biological role, involved in retrograde transport from early and late endosomes to late Golgi, leading to the membrane fusion between late Golgi and endosomal vesicles. The sequence is that of Vacuolar protein sorting-associated protein 53 B from Arabidopsis thaliana (Mouse-ear cress).